The following is a 304-amino-acid chain: Glycine--tRNA ligase alpha subunit (304 aa).

Belongs to the class-II aminoacyl-tRNA synthetase family. Tetramer of two alpha and two beta subunits.

Its subcellular location is the cytoplasm. The catalysed reaction is tRNA(Gly) + glycine + ATP = glycyl-tRNA(Gly) + AMP + diphosphate. The polypeptide is Glycine--tRNA ligase alpha subunit (Yersinia enterocolitica serotype O:8 / biotype 1B (strain NCTC 13174 / 8081)).